Reading from the N-terminus, the 278-residue chain is Shikimate dehydrogenase (NADP(+)) (278 aa).

Shikimate-binding positions include 19 to 21 and Thr66; that span reads SRS. The Proton acceptor role is filled by Lys70. Asn91 and Asp106 together coordinate shikimate. NADP(+) is bound by residues 129–133 and Phe221; that span reads GAGGA. A shikimate-binding site is contributed by Tyr223. Position 242 (Gly242) interacts with NADP(+).

It belongs to the shikimate dehydrogenase family. Homodimer.

The catalysed reaction is shikimate + NADP(+) = 3-dehydroshikimate + NADPH + H(+). The protein operates within metabolic intermediate biosynthesis; chorismate biosynthesis; chorismate from D-erythrose 4-phosphate and phosphoenolpyruvate: step 4/7. Functionally, involved in the biosynthesis of the chorismate, which leads to the biosynthesis of aromatic amino acids. Catalyzes the reversible NADPH linked reduction of 3-dehydroshikimate (DHSA) to yield shikimate (SA). The polypeptide is Shikimate dehydrogenase (NADP(+)) (Anaeromyxobacter sp. (strain K)).